A 400-amino-acid chain; its full sequence is Peptidase M20 domain-containing protein C757.05c (400 aa).

An N-terminal signal peptide occupies residues 1 to 25 (MTMKISVWSLLIVIGYHLWMSPVLA). Asn-80 carries an N-linked (GlcNAc...) asparagine glycan. Asp-152 is a Zn(2+) binding site. The Proton acceptor role is filled by Glu-186. Glu-187 provides a ligand contact to Zn(2+).

Belongs to the peptidase M20A family. Zn(2+) is required as a cofactor.

It localises to the secreted. This is Peptidase M20 domain-containing protein C757.05c from Schizosaccharomyces pombe (strain 972 / ATCC 24843) (Fission yeast).